The following is a 103-amino-acid chain: Large ribosomal subunit protein bL21 (103 aa).

It belongs to the bacterial ribosomal protein bL21 family. As to quaternary structure, part of the 50S ribosomal subunit. Contacts protein L20.

Functionally, this protein binds to 23S rRNA in the presence of protein L20. This Methylibium petroleiphilum (strain ATCC BAA-1232 / LMG 22953 / PM1) protein is Large ribosomal subunit protein bL21.